The chain runs to 126 residues: Protein ApaG (126 aa).

In terms of domain architecture, ApaG spans aspartate 2–asparagine 126.

The chain is Protein ApaG from Vibrio vulnificus (strain CMCP6).